A 526-amino-acid polypeptide reads, in one-letter code: Peptide chain release factor 3 (526 aa).

One can recognise a tr-type G domain in the interval 9 to 277 (DLRRTFAIIS…GLTKWAPKPL (269 aa)). Residues 18 to 25 (SHPDAGKT), 86 to 90 (DTPGH), and 140 to 143 (NKMD) each bind GTP.

The protein belongs to the TRAFAC class translation factor GTPase superfamily. Classic translation factor GTPase family. PrfC subfamily.

The protein localises to the cytoplasm. In terms of biological role, increases the formation of ribosomal termination complexes and stimulates activities of RF-1 and RF-2. It binds guanine nucleotides and has strong preference for UGA stop codons. It may interact directly with the ribosome. The stimulation of RF-1 and RF-2 is significantly reduced by GTP and GDP, but not by GMP. This chain is Peptide chain release factor 3, found in Colwellia psychrerythraea (strain 34H / ATCC BAA-681) (Vibrio psychroerythus).